A 406-amino-acid chain; its full sequence is Serine/threonine transporter SstT (406 aa).

The next 9 helical transmembrane spans lie at Ile11–Met31, Phe45–Ile65, Val79–Phe99, Ala141–Leu161, Phe185–Thr205, Leu216–Val236, Met298–Val318, Val330–Ile350, and Phe357–Val377.

The protein belongs to the dicarboxylate/amino acid:cation symporter (DAACS) (TC 2.A.23) family.

It is found in the cell inner membrane. It carries out the reaction L-serine(in) + Na(+)(in) = L-serine(out) + Na(+)(out). The enzyme catalyses L-threonine(in) + Na(+)(in) = L-threonine(out) + Na(+)(out). Its function is as follows. Involved in the import of serine and threonine into the cell, with the concomitant import of sodium (symport system). The protein is Serine/threonine transporter SstT of Psychrobacter sp. (strain PRwf-1).